We begin with the raw amino-acid sequence, 239 residues long: Protein TIPIN homolog (239 aa).

2 stretches are compositionally biased toward acidic residues: residues 1–14 and 156–166; these read MDEM…DELD and DGADDDEDDLF. 2 disordered regions span residues 1 to 38 and 135 to 239; these read MDEM…RRII and ESTD…NNDW. Composition is skewed to basic and acidic residues over residues 169–193 and 206–223; these read LPEK…EKKN and YRMM…AREA. Positions 224 to 239 are enriched in acidic residues; it reads EAEDELMEDFDLNNDW.

It belongs to the CSM3 family.

It localises to the cytoplasm. The protein resides in the nucleus. Its function is as follows. Required for normal progression of S-phase. Important for cell survival after DNA damage or replication stress. The sequence is that of Protein TIPIN homolog from Caenorhabditis briggsae.